Here is a 148-residue protein sequence, read N- to C-terminus: Cell division protein SepF (148 aa).

The disordered stretch occupies residues 1 to 59 (MNNKFKDFFGFGDNDSYEERDAYEEHYDEQEEMQNSNRPTNSRDSNVVSIKAGQAGSGP). Positions 33 to 48 (MQNSNRPTNSRDSNVV) are enriched in polar residues.

The protein belongs to the SepF family. As to quaternary structure, homodimer. Interacts with FtsZ.

Its subcellular location is the cytoplasm. Functionally, cell division protein that is part of the divisome complex and is recruited early to the Z-ring. Probably stimulates Z-ring formation, perhaps through the cross-linking of FtsZ protofilaments. Its function overlaps with FtsA. The protein is Cell division protein SepF of Lactobacillus delbrueckii subsp. bulgaricus (strain ATCC BAA-365 / Lb-18).